The primary structure comprises 316 residues: Phospholipase A1 4 (316 aa).

Positions 1 to 4 (ADDL) are cleaved as a signal peptide. The propeptide occupies 5–14 (TTLRNGTLDR). An intrachain disulfide couples C20 to C103. The Nucleophile role is filled by S153. D181 (charge relay system) is an active-site residue. 2 cysteine pairs are disulfide-bonded: C192–C197 and C235–C240. H242 functions as the Charge relay system in the catalytic mechanism. Intrachain disulfides connect C257–C284, C258–C309, and C277–C282.

The protein belongs to the AB hydrolase superfamily. Lipase family. As to expression, expressed by the venom gland.

Its subcellular location is the secreted. It carries out the reaction a 1,2-diacyl-sn-glycero-3-phosphocholine + H2O = a 2-acyl-sn-glycero-3-phosphocholine + a fatty acid + H(+). Functionally, catalyzes the hydrolysis of phosphatidylcholine with phospholipase A1 activity. May act as an allergen and induce hemolytic activity. The chain is Phospholipase A1 4 from Polistes dominula (European paper wasp).